The primary structure comprises 690 residues: Eukaryotic translation initiation factor 3 subunit B (690 aa).

The segment covering 1–11 (MAKKKSEEHSG) has biased composition (basic and acidic residues). The disordered stretch occupies residues 1-33 (MAKKKSEEHSGTDANDSDYQEEPNFDDPPGFVD). Acidic residues predominate over residues 15–25 (NDSDYQEEPNF). Positions 57-141 (SVVVVDNIPK…HTFAVNLFTD (85 aa)) constitute an RRM domain. WD repeat units follow at residues 207–246 (TRERFTDTFVKWSPLGTYVVTFHKPGVAIWGGSSFQKIQK), 293–331 (DGMSVLSMFRWSHDDKFVARMGENSIHIYETPSFYLLDL), 334–369 (IKIPGIRGFSWSPTDNVIAYWVEEQNQIPARVTLME), 442–484 (EIRE…KPSL), and 530–575 (PDHF…IKRT). The stretch at 595-645 (EEKQKEIKKNLKKYYAAFEQKDRLRLTRASKELLEKRSQLRETFMEYRNKR) forms a coiled coil.

The protein belongs to the eIF-3 subunit B family. As to quaternary structure, component of the eukaryotic translation initiation factor 3 (eIF-3) complex. The eIF-3 complex interacts with pix. Interacts with mxt.

The protein resides in the cytoplasm. Functionally, RNA-binding component of the eukaryotic translation initiation factor 3 (eIF-3) complex, which is involved in protein synthesis of a specialized repertoire of mRNAs and, together with other initiation factors, stimulates binding of mRNA and methionyl-tRNAi to the 40S ribosome. The eIF-3 complex specifically targets and initiates translation of a subset of mRNAs involved in cell proliferation. This is Eukaryotic translation initiation factor 3 subunit B from Drosophila melanogaster (Fruit fly).